Consider the following 174-residue polypeptide: Actin-related protein 2/3 complex subunit 3 (174 aa).

Belongs to the ARPC3 family. In terms of assembly, component of the Arp2/3 complex composed of arp2, act2, arc1/p41-ARC, arc2/p34-ARC, arc3/p21-ARC, arc4/p20-ARC and arc5/p16-ARC.

The protein localises to the cytoplasm. The protein resides in the cytoskeleton. It is found in the actin patch. Functions as a component of the Arp2/3 complex which is involved in regulation of actin polymerization and together with an activating nucleation-promoting factor (NPF) mediates the formation of branched actin networks. This Schizosaccharomyces pombe (strain 972 / ATCC 24843) (Fission yeast) protein is Actin-related protein 2/3 complex subunit 3 (arc3).